Here is a 558-residue protein sequence, read N- to C-terminus: Potassium-transporting ATPase potassium-binding subunit 1 (558 aa).

The next 12 helical transmembrane spans lie at 1–21, 66–86, 127–147, 166–186, 245–265, 281–301, 327–347, 354–374, 377–397, 416–436, 482–502, and 531–551; these read MEIILFLTMMVMITYVFSGYL, FNGFMGFITFVLLIVQQWLFL, MIVMTYLMFTSSASGYAVCIA, IVRFIVRVLLPLSCLISILLM, IWSNFIEMGSMMLLPMSMLFL, ALILFVAMFFIFIAILTLTMW, FGAGLSALFTVITTAFTTGSV, LTPIGGLGPMVLMMLNVVFGG, VGLMNLLIFVLLTVFICSLMV, IVLVFLIHPILILVFSALAFM, ISTGIIMLLSRYIPIILQLMI, and IVFIVLLSGLTFIPVLLLGPI.

It belongs to the KdpA family. The system is composed of three essential subunits: KdpA, KdpB and KdpC.

The protein resides in the cell membrane. Its function is as follows. Part of the high-affinity ATP-driven potassium transport (or Kdp) system, which catalyzes the hydrolysis of ATP coupled with the electrogenic transport of potassium into the cytoplasm. This subunit binds the extracellular potassium ions and delivers the ions to the membrane domain of KdpB through an intramembrane tunnel. The polypeptide is Potassium-transporting ATPase potassium-binding subunit 1 (Staphylococcus aureus (strain Mu50 / ATCC 700699)).